The primary structure comprises 486 residues: Membrane-bound lytic murein transglycosylase F (486 aa).

A signal peptide spans 1–26 (MFSPMALRPRCAKWLIVTGLFLMLGA). Residues 27–267 (CVEKPSTLER…RLKDRYYGHV (241 aa)) are non-LT domain. Positions 268 to 486 (DVLGYVGAYT…TKPPEENPPL (219 aa)) are LT domain. Glu314 is an active-site residue. Residues 464–486 (VAEGNLHVPGVNKTKPPEENPPL) form a disordered region.

This sequence in the N-terminal section; belongs to the bacterial solute-binding protein 3 family. The protein in the C-terminal section; belongs to the transglycosylase Slt family.

It localises to the cell outer membrane. The enzyme catalyses Exolytic cleavage of the (1-&gt;4)-beta-glycosidic linkage between N-acetylmuramic acid (MurNAc) and N-acetylglucosamine (GlcNAc) residues in peptidoglycan, from either the reducing or the non-reducing ends of the peptidoglycan chains, with concomitant formation of a 1,6-anhydrobond in the MurNAc residue.. Functionally, murein-degrading enzyme that degrades murein glycan strands and insoluble, high-molecular weight murein sacculi, with the concomitant formation of a 1,6-anhydromuramoyl product. Lytic transglycosylases (LTs) play an integral role in the metabolism of the peptidoglycan (PG) sacculus. Their lytic action creates space within the PG sacculus to allow for its expansion as well as for the insertion of various structures such as secretion systems and flagella. This chain is Membrane-bound lytic murein transglycosylase F, found in Pseudomonas fluorescens (strain ATCC BAA-477 / NRRL B-23932 / Pf-5).